Here is a 66-residue protein sequence, read N- to C-terminus: MPQLDMSPWPMVIMSMILTLFYITQLKMLNFTFYNTPSSKLSMPHKHKTTWELKWTKIYLPPSMYQ.

The chain crosses the membrane as a helical span at residues 8-24; that stretch reads PWPMVIMSMILTLFYIT. Lys-54 carries the N6-acetyllysine; alternate modification. At Lys-54 the chain carries N6-succinyllysine; alternate. Position 57 is an N6-acetyllysine (Lys-57).

This sequence belongs to the ATPase protein 8 family. In terms of assembly, F-type ATPases have 2 components, CF(1) - the catalytic core - and CF(0) - the membrane proton channel. Component of an ATP synthase complex composed of ATP5PB, ATP5MC1, ATP5F1E, ATP5PD, ATP5ME, ATP5PF, ATP5MF, MT-ATP6, MT-ATP8, ATP5F1A, ATP5F1B, ATP5F1D, ATP5F1C, ATP5PO, ATP5MG, ATP5MK and ATP5MJ. Interacts with PRICKLE3.

It localises to the mitochondrion membrane. Its function is as follows. Mitochondrial membrane ATP synthase (F(1)F(0) ATP synthase or Complex V) produces ATP from ADP in the presence of a proton gradient across the membrane which is generated by electron transport complexes of the respiratory chain. F-type ATPases consist of two structural domains, F(1) - containing the extramembraneous catalytic core and F(0) - containing the membrane proton channel, linked together by a central stalk and a peripheral stalk. During catalysis, ATP synthesis in the catalytic domain of F(1) is coupled via a rotary mechanism of the central stalk subunits to proton translocation. Part of the complex F(0) domain. Minor subunit located with subunit a in the membrane. This is ATP synthase protein 8 (MT-ATP8) from Alouatta sara (Bolivian red howler monkey).